The chain runs to 902 residues: Serine/threonine-protein kinase cbk1 (902 aa).

Disordered stretches follow at residues 1–22 (MSED…TCLK), 97–154 (ETHS…REDA), and 207–288 (QRMM…MVSP). Basic and acidic residues predominate over residues 97–118 (ETHSHSSDAEGTSHQDVSDRRN). Over residues 125–134 (RPSSHSQADS) the composition is skewed to polar residues. Basic and acidic residues-rich tracts occupy residues 142 to 154 (QQKE…REDA) and 210 to 221 (MLDRGNPKRERS). The span at 222–239 (SGSSTPSSKSSPVDSVST) shows a compositional bias: low complexity. The span at 240–259 (APTSVSPGSLAPSGSTNNDP) shows a compositional bias: polar residues. The segment covering 264–274 (KHIDSQADLPE) has biased composition (basic and acidic residues). Residues 378 to 732 (FEPLKILGRG…SPKYKQNDAI (355 aa)) enclose the Protein kinase domain. Residues 384 to 392 (LGRGSFGVV) and K432 each bind ATP. Catalysis depends on D527, which acts as the Proton acceptor. Positions 771-831 (RGINWEQIHR…KWHPLGGKGG (61 aa)) constitute an AGC-kinase C-terminal domain. The segment covering 797-806 (YFDDGEHPSD) has biased composition (basic and acidic residues). Positions 797-875 (YFDDGEHPSD…KKRLKEAKRA (79 aa)) are disordered. Residues 807 to 818 (REDDSSDSELDG) show a composition bias toward acidic residues. Residues 833 to 843 (HKPDKPLKADV) are compositionally biased toward basic and acidic residues.

This sequence belongs to the protein kinase superfamily. STE Ser/Thr protein kinase family. COT1 subfamily.

It carries out the reaction L-seryl-[protein] + ATP = O-phospho-L-seryl-[protein] + ADP + H(+). It catalyses the reaction L-threonyl-[protein] + ATP = O-phospho-L-threonyl-[protein] + ADP + H(+). Functionally, protein kinase that seems to play a role in the regulation of cell morphogenesis and proliferation. This Emericella nidulans (strain FGSC A4 / ATCC 38163 / CBS 112.46 / NRRL 194 / M139) (Aspergillus nidulans) protein is Serine/threonine-protein kinase cbk1 (cbk1).